The chain runs to 350 residues: Ion-translocating oxidoreductase complex subunit D (350 aa).

A run of 4 helical transmembrane segments spans residues 37–57 (YFFGFGVLIQVMLAIVVALTA), 68–88 (AVLSTISDNSALLTAILIGVA), 89–109 (IPPIAPWWLVVIGTLFAIVLV), and 120–140 (IFNPAMAAYVMLLISFPVQMT). Thr185 is subject to FMN phosphoryl threonine. 5 helical membrane-spanning segments follow: residues 212–232 (GYGVGWFWVNMAYLAGGLIML), 239–259 (WHISFAILGSLFVCSSFGYLL), 265–285 (VGPLLQLFSGATMIAAFFIAT), 291–311 (ATSVKGRLLFGTLIGVMVYVI), and 315–335 (GGYPDAFAFAVLLANLCAPFI).

It belongs to the NqrB/RnfD family. As to quaternary structure, the complex is composed of six subunits: RnfA, RnfB, RnfC, RnfD, RnfE and RnfG. Requires FMN as cofactor.

It is found in the cell inner membrane. In terms of biological role, part of a membrane-bound complex that couples electron transfer with translocation of ions across the membrane. This chain is Ion-translocating oxidoreductase complex subunit D, found in Shewanella pealeana (strain ATCC 700345 / ANG-SQ1).